The primary structure comprises 383 residues: Ceramide synthase 3 (383 aa).

A helical transmembrane segment spans residues 32-52 (VFVKPSHLYVTIPYAFLLLII). A homeobox-like region spans residues 66-127 (KSFGIKETVR…RSRRNQERPS (62 aa)). Positions 130-331 (KKFQEACWRF…ILKMLNRCIF (202 aa)) constitute a TLC domain. 5 helical membrane-spanning segments follow: residues 139 to 159 (FAFYLMITVAGIAFLYDKPWL), 174 to 194 (LLPSQYWYYILEMSFYWSLLF), 205 to 225 (FLAHIIHHLAAISLMSFSWCA), 264 to 284 (FFIFSTIFFISRLIVFPFWIL), and 298 to 318 (FFSYIFLNLQLMILQVLHLYW). The Cytoplasmic segment spans residues 319–383 (GYYILKMLNR…HLIPNGQHGH (65 aa)). Ser340 carries the post-translational modification Phosphoserine. Residues 342-355 (DEDYEEEEEEEEEE) are compositionally biased toward acidic residues. Residues 342–363 (DEDYEEEEEEEEEEATKGKEMD) are disordered.

As to expression, expressed in the epidermis, where it localizes at the interface between the stratum granulosum and the stratum corneum (at protein level).

The protein localises to the endoplasmic reticulum membrane. It catalyses the reaction a very long-chain fatty acyl-CoA + a sphingoid base = an N-(very-long-chain fatty acyl)-sphingoid base + CoA + H(+). It carries out the reaction docosanoyl-CoA + sphinganine = N-docosanoylsphinganine + CoA + H(+). The catalysed reaction is tetracosanoyl-CoA + sphinganine = N-tetracosanoylsphinganine + CoA + H(+). The enzyme catalyses hexacosanoyl-CoA + sphinganine = N-hexacosanoylsphinganine + CoA + H(+). It catalyses the reaction 2-hydroxydocosanoyl-CoA + sphinganine = N-(2-hydroxydocosanoyl)-sphinganine + CoA + H(+). It carries out the reaction 2-hydroxytetracosanoyl-CoA + sphinganine = N-(2-hydroxytetracosanoyl)-sphinganine + CoA + H(+). The catalysed reaction is an ultra-long-chain fatty acyl-CoA + a sphingoid base = an N-(ultra-long-chain-acyl)-sphingoid base + CoA + H(+). The enzyme catalyses octacosanoyl-CoA + sphinganine = N-(octacosanoyl)-sphinganine + CoA + H(+). It catalyses the reaction a fatty acyl-CoA + sphing-4-enine = an N-acylsphing-4-enine + CoA + H(+). It carries out the reaction sphinganine + octadecanoyl-CoA = N-(octadecanoyl)-sphinganine + CoA + H(+). The catalysed reaction is 2-hydroxyoctadecanoyl-CoA + sphinganine = N-(2-hydroxyoctadecanoyl)-sphinganine + CoA + H(+). Its pathway is lipid metabolism; sphingolipid metabolism. Ceramide synthase that catalyzes the transfer of the acyl chain from acyl-CoA to a sphingoid base, with high selectivity toward very- and ultra-long-chain fatty acyl-CoA (chain length greater than C22). N-acylates sphinganine and sphingosine bases to form dihydroceramides and ceramides in de novo synthesis and salvage pathways, respectively. It is crucial for the synthesis of ultra-long-chain ceramides in the epidermis, to maintain epidermal lipid homeostasis and terminal differentiation. The polypeptide is Ceramide synthase 3 (Homo sapiens (Human)).